A 143-amino-acid chain; its full sequence is Nucleoside diphosphate kinase (143 aa).

Lysine 11, phenylalanine 59, arginine 87, threonine 93, arginine 104, and asparagine 114 together coordinate ATP. Histidine 117 functions as the Pros-phosphohistidine intermediate in the catalytic mechanism.

This sequence belongs to the NDK family. As to quaternary structure, homotetramer. Requires Mg(2+) as cofactor.

Its subcellular location is the cytoplasm. It catalyses the reaction a 2'-deoxyribonucleoside 5'-diphosphate + ATP = a 2'-deoxyribonucleoside 5'-triphosphate + ADP. The enzyme catalyses a ribonucleoside 5'-diphosphate + ATP = a ribonucleoside 5'-triphosphate + ADP. Its function is as follows. Major role in the synthesis of nucleoside triphosphates other than ATP. The ATP gamma phosphate is transferred to the NDP beta phosphate via a ping-pong mechanism, using a phosphorylated active-site intermediate. The polypeptide is Nucleoside diphosphate kinase (Shewanella sp. (strain ANA-3)).